The sequence spans 101 residues: MAKTSMKAREAKRAQLVAKFAEKRAALKVIIASPASSDEDRWDAVLKLQALPRDSSASRQRNRCNQTGRPHGFLRKFGLSRIKLREATMRGEVPGLRKASW.

The protein belongs to the universal ribosomal protein uS14 family. Part of the 30S ribosomal subunit. Contacts proteins S3 and S10.

Functionally, binds 16S rRNA, required for the assembly of 30S particles and may also be responsible for determining the conformation of the 16S rRNA at the A site. This chain is Small ribosomal subunit protein uS14, found in Shewanella oneidensis (strain ATCC 700550 / JCM 31522 / CIP 106686 / LMG 19005 / NCIMB 14063 / MR-1).